The following is a 195-amino-acid chain: Capsid protein (195 aa).

Residues 148-195 (NAPILSTLPETTVVRRRGRSPRRRTPSPRRRRSQSPRRRRSASPASQC) form a disordered region. A compositionally biased stretch (basic residues) spans 161-188 (VRRRGRSPRRRTPSPRRRRSQSPRRRRS). Phosphoserine; by host is present on residues Ser-167, Ser-174, and Ser-182. The stretch at 167 to 172 (SPRRRT) is one 1; half-length repeat. Residues 167 to 188 (SPRRRTPSPRRRRSQSPRRRRS) are 3 X 7 AA repeats of S-P-R-R-R-[PR]-S. A Bipartite nuclear localization signal motif is present at residues 170–187 (RRTPSPRRRRSQSPRRRR). 2 tandem repeats follow at residues 174 to 180 (SPRRRRS) and 182 to 188 (SPRRRRS). The RNA binding stretch occupies residues 189 to 195 (ASPASQC).

The protein belongs to the orthohepadnavirus core antigen family. Homodimerizes, then multimerizes. Interacts with cytosol exposed regions of viral L glycoprotein present in the reticulum-to-Golgi compartment. Interacts with human FLNB. Phosphorylated form interacts with host importin alpha; this interaction depends on the exposure of the NLS, which itself depends upon genome maturation and/or phosphorylation of the capsid protein. Interacts with host NUP153. In terms of processing, phosphorylated by host SRPK1, SRPK2, and maybe protein kinase C or GAPDH. Phosphorylation is critical for pregenomic RNA packaging. Protein kinase C phosphorylation is stimulated by HBx protein and may play a role in transport of the viral genome to the nucleus at the late step during the viral replication cycle.

It is found in the virion. It localises to the host cytoplasm. In terms of biological role, self assembles to form an icosahedral capsid. Most capsids appear to be large particles with an icosahedral symmetry of T=4 and consist of 240 copies of capsid protein, though a fraction forms smaller T=3 particles consisting of 180 capsid proteins. Entering capsids are transported along microtubules to the nucleus. Phosphorylation of the capsid is thought to induce exposure of nuclear localization signal in the C-terminal portion of the capsid protein that allows binding to the nuclear pore complex via the importin (karyopherin-) alpha and beta. Capsids are imported in intact form through the nuclear pore into the nuclear basket, where it probably binds NUP153. Only capsids that contain the mature viral genome can release the viral DNA and capsid protein into the nucleoplasm. Immature capsids get stuck in the basket. Capsids encapsulate the pre-genomic RNA and the P protein. Pre-genomic RNA is reverse-transcribed into DNA while the capsid is still in the cytoplasm. The capsid can then either be directed to the nucleus, providing more genomes for transcription, or bud through the endoplasmic reticulum to provide new virions. The protein is Capsid protein of Hepatitis B virus genotype G (isolate IG29227/2000) (HBV-G).